Consider the following 805-residue polypeptide: Leucine--tRNA ligase (805 aa).

The 'HIGH' region motif lies at 40–51; that stretch reads PYPSGSGLHVGH. Residues 576 to 580 carry the 'KMSKS' region motif; the sequence is KMSKS. Lys-579 serves as a coordination point for ATP.

Belongs to the class-I aminoacyl-tRNA synthetase family.

The protein resides in the cytoplasm. The enzyme catalyses tRNA(Leu) + L-leucine + ATP = L-leucyl-tRNA(Leu) + AMP + diphosphate. The polypeptide is Leucine--tRNA ligase (Chlorobium limicola (strain DSM 245 / NBRC 103803 / 6330)).